A 265-amino-acid chain; its full sequence is RNA polymerase sigma factor SigI2 (265 aa).

Positions 71–84 (DEFSVGLAAFNEAI) match the Polymerase core binding motif. A DNA-binding region (H-T-H motif) is located at residues 211-230 (KTELLKLLKINKKTIERNRT).

This sequence belongs to the sigma-70 factor family. SigI subfamily. Interacts with RsgI2.

It localises to the cytoplasm. Negatively regulated by the anti-sigma-I factor RsgI2. Binding of the polysaccharide substrate to RsgI2 may lead to the release and activation of SigI2. Functionally, sigma factors are initiation factors that promote the attachment of RNA polymerase to specific initiation sites and are then released. This sigma factor is involved in regulation of cellulosomal genes via an external polysaccharide-sensing mechanism. This is RNA polymerase sigma factor SigI2 from Acetivibrio thermocellus (strain ATCC 27405 / DSM 1237 / JCM 9322 / NBRC 103400 / NCIMB 10682 / NRRL B-4536 / VPI 7372) (Clostridium thermocellum).